The following is a 77-amino-acid chain: Acyl carrier protein (77 aa).

Residues 1 to 76 enclose the Carrier domain; that stretch reads MENFDKVKDI…DAVKFINSLE (76 aa). Ser-36 is subject to O-(pantetheine 4'-phosphoryl)serine.

This sequence belongs to the acyl carrier protein (ACP) family. In terms of processing, 4'-phosphopantetheine is transferred from CoA to a specific serine of apo-ACP by AcpS. This modification is essential for activity because fatty acids are bound in thioester linkage to the sulfhydryl of the prosthetic group.

The protein localises to the cytoplasm. It participates in lipid metabolism; fatty acid biosynthesis. Functionally, carrier of the growing fatty acid chain in fatty acid biosynthesis. The polypeptide is Acyl carrier protein (Staphylococcus aureus (strain Mu3 / ATCC 700698)).